We begin with the raw amino-acid sequence, 456 residues long: Putative F-box/FBD/LRR-repeat protein At1g66300 (456 aa).

A disordered region spans residues 1–23 (MDEDGEKRVRTKRLCSPESSDKK). The region spanning 28–74 (VDWVRDLPESLICHVLLNLSTKDVIKNCVLSTKWRYLWRYVPGLDLD) is the F-box domain. 4 LRR repeats span residues 136–163 (HLDLEWGALEIPPIVYVCKSLVSLKLCG), 185–210 (VKFANDLALEMLISGCLVLKSLTLCR), 234–260 (PNTMGPEYEELIVEIDTPKLQDLTLSH), and 347–372 (FYEDRWEMLPFFLESCPNLKSLVVGS). An FBD domain is found at 377–429 (MERTSIISGHRCLLSSLEYVEIETPLTGEVFEMKLVSYLLENSPILKKLTIHL).

The polypeptide is Putative F-box/FBD/LRR-repeat protein At1g66300 (Arabidopsis thaliana (Mouse-ear cress)).